The chain runs to 652 residues: tRNA 5-methylaminomethyl-2-thiouridine biosynthesis bifunctional protein MnmC (652 aa).

The interval 1–235 (MPDRLVPATL…EPALRVGEYA (235 aa)) is tRNA (mnm(5)s(2)U34)-methyltransferase. The tract at residues 259-652 (IGAGLAGCAV…IRALRGRQIG (394 aa)) is FAD-dependent cmnm(5)s(2)U34 oxidoreductase.

In the N-terminal section; belongs to the methyltransferase superfamily. tRNA (mnm(5)s(2)U34)-methyltransferase family. This sequence in the C-terminal section; belongs to the DAO family. FAD serves as cofactor.

The protein localises to the cytoplasm. It catalyses the reaction 5-aminomethyl-2-thiouridine(34) in tRNA + S-adenosyl-L-methionine = 5-methylaminomethyl-2-thiouridine(34) in tRNA + S-adenosyl-L-homocysteine + H(+). Functionally, catalyzes the last two steps in the biosynthesis of 5-methylaminomethyl-2-thiouridine (mnm(5)s(2)U) at the wobble position (U34) in tRNA. Catalyzes the FAD-dependent demodification of cmnm(5)s(2)U34 to nm(5)s(2)U34, followed by the transfer of a methyl group from S-adenosyl-L-methionine to nm(5)s(2)U34, to form mnm(5)s(2)U34. This is tRNA 5-methylaminomethyl-2-thiouridine biosynthesis bifunctional protein MnmC from Burkholderia ambifaria (strain MC40-6).